A 295-amino-acid polypeptide reads, in one-letter code: Aspartate carbamoyltransferase catalytic subunit (295 aa).

Carbamoyl phosphate is bound by residues Arg-49 and Thr-50. Lys-77 is an L-aspartate binding site. The carbamoyl phosphate site is built by Arg-99, His-127, and Gln-130. Residues Arg-161 and Arg-212 each contribute to the L-aspartate site. Carbamoyl phosphate contacts are provided by Gly-251 and Pro-252.

The protein belongs to the aspartate/ornithine carbamoyltransferase superfamily. ATCase family. Heterododecamer (2C3:3R2) of six catalytic PyrB chains organized as two trimers (C3), and six regulatory PyrI chains organized as three dimers (R2).

The enzyme catalyses carbamoyl phosphate + L-aspartate = N-carbamoyl-L-aspartate + phosphate + H(+). Its pathway is pyrimidine metabolism; UMP biosynthesis via de novo pathway; (S)-dihydroorotate from bicarbonate: step 2/3. Catalyzes the condensation of carbamoyl phosphate and aspartate to form carbamoyl aspartate and inorganic phosphate, the committed step in the de novo pyrimidine nucleotide biosynthesis pathway. The protein is Aspartate carbamoyltransferase catalytic subunit of Campylobacter jejuni subsp. jejuni serotype O:23/36 (strain 81-176).